The sequence spans 267 residues: Undecaprenyl-diphosphatase (267 aa).

7 helical membrane-spanning segments follow: residues 1-21 (MTLFHLILVAVIQGLTEFLPV), 49-69 (VGTLFAVVLYFRADVAVAVAG), 83-103 (AFLALCLLIATVPVMVVGLAL), 111-131 (ALRSMAVIGWTMLIFGIVLYW), 190-210 (MLMSIPTILASGGLLGVEVAA), 219-239 (DAAIGAVFAFGAALLALTLMM), and 245-265 (VSFTPYVIYRVCLGTILLIIA).

Belongs to the UppP family.

It is found in the cell inner membrane. The catalysed reaction is di-trans,octa-cis-undecaprenyl diphosphate + H2O = di-trans,octa-cis-undecaprenyl phosphate + phosphate + H(+). In terms of biological role, catalyzes the dephosphorylation of undecaprenyl diphosphate (UPP). Confers resistance to bacitracin. This chain is Undecaprenyl-diphosphatase, found in Dinoroseobacter shibae (strain DSM 16493 / NCIMB 14021 / DFL 12).